Reading from the N-terminus, the 256-residue chain is MTFLAIDVGNTRLKWALYDAPRAGAALRAHGVEFLDHIDRLAEGSWARLPPPGHMLGCVVAGDAVKRRVQEQMEIWDVTPSWVVASAQEAGLSNGYDHPSRLGADRWVAMIGARQHVLARGPARPLVLVMVGTAVTVECVDAQGRFIGGLILPGHGIMLRALESGTAGLHVPTGEVRLFPTNTSDALTSGGTYAIAGAVERMVQHVIAHCGTEPICLMTGGAGWKVAPSMTRPFELLENLIFDGLLEIAMRRLAAA.

7–14 (DVGNTRLK) contacts ATP. Substrate is bound by residues Tyr96 and 103-106 (GADR). Catalysis depends on Asp105, which acts as the Proton acceptor. Thr133 contributes to the ATP binding site. Thr183 is a binding site for substrate.

The protein belongs to the type III pantothenate kinase family. Homodimer. It depends on NH4(+) as a cofactor. K(+) is required as a cofactor.

It localises to the cytoplasm. It carries out the reaction (R)-pantothenate + ATP = (R)-4'-phosphopantothenate + ADP + H(+). Its pathway is cofactor biosynthesis; coenzyme A biosynthesis; CoA from (R)-pantothenate: step 1/5. In terms of biological role, catalyzes the phosphorylation of pantothenate (Pan), the first step in CoA biosynthesis. This chain is Type III pantothenate kinase, found in Verminephrobacter eiseniae (strain EF01-2).